Consider the following 948-residue polypeptide: Isoleucine--tRNA ligase (948 aa).

A 'HIGH' region motif is present at residues proline 58–histidine 68. Glutamate 566 contacts L-isoleucyl-5'-AMP. The 'KMSKS' region signature appears at lysine 607–serine 611. ATP is bound at residue lysine 610. 4 residues coordinate Zn(2+): cysteine 911, cysteine 914, cysteine 931, and cysteine 934.

It belongs to the class-I aminoacyl-tRNA synthetase family. IleS type 1 subfamily. Monomer. Zn(2+) serves as cofactor.

Its subcellular location is the cytoplasm. The enzyme catalyses tRNA(Ile) + L-isoleucine + ATP = L-isoleucyl-tRNA(Ile) + AMP + diphosphate. In terms of biological role, catalyzes the attachment of isoleucine to tRNA(Ile). As IleRS can inadvertently accommodate and process structurally similar amino acids such as valine, to avoid such errors it has two additional distinct tRNA(Ile)-dependent editing activities. One activity is designated as 'pretransfer' editing and involves the hydrolysis of activated Val-AMP. The other activity is designated 'posttransfer' editing and involves deacylation of mischarged Val-tRNA(Ile). This chain is Isoleucine--tRNA ligase, found in Vibrio vulnificus (strain YJ016).